The chain runs to 161 residues: RuBisCO chaperone RbcX (161 aa).

2 disordered regions span residues 1 to 20 (MQFM…KPME) and 130 to 161 (LGAE…SHAD). Positions 147-161 (DSATPDDASNASHAD) are enriched in polar residues.

Belongs to the RbcX family. In terms of assembly, homodimer. Interacts with the exposed C-terminal peptide of endogenous RbcL ('Lys-460-Asp-470') via its central cleft, as well as C-terminal peptides from other cyanobacterial RbcL. Contacts a second RbcL monomer via its peripheral polar surface.

It is found in the carboxysome. Its subcellular location is the cytoplasm. Functionally, an RbcL-specific chaperone. The central cleft of the RbcX homodimer (RbcX2) binds the C-terminus of an RbcL monomer, stabilizing the C-terminus and probably preventing its reassociation with chaperonin GroEL-ES. At the same time the peripheral region of RbcX2 binds a second RbcL monomer, bridging the RbcL homodimers in the correct orientation. The RbcX2(2)-bound RbcL dimers then assemble into the RbcL8 core (RbcL8-(RbcX2)8). RbcS binding triggers the release of RbcX2. The sequence is that of RuBisCO chaperone RbcX from Synechococcus sp. (strain ATCC 27144 / PCC 6301 / SAUG 1402/1) (Anacystis nidulans).